Reading from the N-terminus, the 89-residue chain is Small ribosomal subunit protein uS14 (89 aa).

Belongs to the universal ribosomal protein uS14 family. In terms of assembly, part of the 30S ribosomal subunit. Contacts proteins S3 and S10.

Binds 16S rRNA, required for the assembly of 30S particles and may also be responsible for determining the conformation of the 16S rRNA at the A site. The protein is Small ribosomal subunit protein uS14 of Cytophaga hutchinsonii (strain ATCC 33406 / DSM 1761 / CIP 103989 / NBRC 15051 / NCIMB 9469 / D465).